The following is a 600-amino-acid chain: NADH-quinone oxidoreductase subunit C/D (600 aa).

Positions 1–190 (MVNNMTDLTA…SPFELTKAKQ (190 aa)) are NADH dehydrogenase I subunit C. Residues 214-600 (DFMFLNLGPN…IDFVMSDVDR (387 aa)) form an NADH dehydrogenase I subunit D region.

It in the N-terminal section; belongs to the complex I 30 kDa subunit family. The protein in the C-terminal section; belongs to the complex I 49 kDa subunit family. NDH-1 is composed of 13 different subunits. Subunits NuoB, CD, E, F, and G constitute the peripheral sector of the complex.

The protein localises to the cell inner membrane. It catalyses the reaction a quinone + NADH + 5 H(+)(in) = a quinol + NAD(+) + 4 H(+)(out). In terms of biological role, NDH-1 shuttles electrons from NADH, via FMN and iron-sulfur (Fe-S) centers, to quinones in the respiratory chain. The immediate electron acceptor for the enzyme in this species is believed to be ubiquinone. Couples the redox reaction to proton translocation (for every two electrons transferred, four hydrogen ions are translocated across the cytoplasmic membrane), and thus conserves the redox energy in a proton gradient. The chain is NADH-quinone oxidoreductase subunit C/D from Escherichia coli (strain K12 / DH10B).